A 327-amino-acid polypeptide reads, in one-letter code: MLIALIAGIVTFILTIIGIPAFIRFYHKARITGQQMHEDVKQHQAKAGTPTMGGTVFLLTSVLASFVIGLFSHQLSNGLIMILFILVLYGVVGFLDDFLKVFRKINEGLNPKQKLFLQLVGGVVFYFFYNQHGAGDQLNIFTVPVQLGFLYVFFVLFWLIGFSNAVNLTDGIDGLASISVVISLVAYAVIAVEQKRFDILIVIISMIGGLLGFFVFNHKPAKIFMGDVGSLALGGMLAAISISLHQEWTLLLIGIVYVFETTSVMMQVTYFKLTGGKRIFRMTPVHHHFELGGLTGHGKEWSEWKVDFFFWGIGIVGSLLTLAILYL.

The next 10 membrane-spanning stretches (helical) occupy residues Ile-3 to Ile-23, Thr-51 to Phe-71, Leu-75 to Leu-95, Leu-115 to Gly-135, Ile-140 to Ile-160, Ile-172 to Val-192, Phe-197 to Asn-217, Ile-223 to Ser-243, Trp-248 to Val-268, and Val-306 to Tyr-326.

Belongs to the glycosyltransferase 4 family. MraY subfamily. It depends on Mg(2+) as a cofactor.

The protein localises to the cell membrane. It catalyses the reaction UDP-N-acetyl-alpha-D-muramoyl-L-alanyl-gamma-D-glutamyl-L-lysyl-D-alanyl-D-alanine + di-trans,octa-cis-undecaprenyl phosphate = Mur2Ac(oyl-L-Ala-gamma-D-Glu-L-Lys-D-Ala-D-Ala)-di-trans,octa-cis-undecaprenyl diphosphate + UMP. It functions in the pathway cell wall biogenesis; peptidoglycan biosynthesis. Functionally, catalyzes the initial step of the lipid cycle reactions in the biosynthesis of the cell wall peptidoglycan: transfers peptidoglycan precursor phospho-MurNAc-pentapeptide from UDP-MurNAc-pentapeptide onto the lipid carrier undecaprenyl phosphate, yielding undecaprenyl-pyrophosphoryl-MurNAc-pentapeptide, known as lipid I. This is Phospho-N-acetylmuramoyl-pentapeptide-transferase from Streptococcus sanguinis (strain SK36).